The sequence spans 218 residues: Probable GTP-binding protein EngB (218 aa).

Residues 23–200 form the EngB-type G domain; the sequence is EVPEIAFVGR…AQLLWQWAHP (178 aa). GTP is bound by residues 31 to 38, 58 to 62, 80 to 83, 150 to 153, and 179 to 181; these read GRSNAGKS, GRTQH, DLPG, TKAD, and FSA. 2 residues coordinate Mg(2+): S38 and T60.

Belongs to the TRAFAC class TrmE-Era-EngA-EngB-Septin-like GTPase superfamily. EngB GTPase family. Requires Mg(2+) as cofactor.

Necessary for normal cell division and for the maintenance of normal septation. The protein is Probable GTP-binding protein EngB of Acidovorax ebreus (strain TPSY) (Diaphorobacter sp. (strain TPSY)).